A 341-amino-acid polypeptide reads, in one-letter code: Glycerol-3-phosphate dehydrogenase [NAD(P)+] (341 aa).

Residues Ser-14, Phe-15, Arg-35, and Lys-108 each contribute to the NADPH site. The sn-glycerol 3-phosphate site is built by Lys-108 and Gly-136. Ala-140 lines the NADPH pocket. The sn-glycerol 3-phosphate site is built by Lys-191, Asp-244, Ser-254, Arg-255, and Asn-256. The Proton acceptor role is filled by Lys-191. Arg-255 is a binding site for NADPH. NADPH contacts are provided by Val-279 and Glu-281.

This sequence belongs to the NAD-dependent glycerol-3-phosphate dehydrogenase family.

The protein resides in the cytoplasm. It catalyses the reaction sn-glycerol 3-phosphate + NAD(+) = dihydroxyacetone phosphate + NADH + H(+). It carries out the reaction sn-glycerol 3-phosphate + NADP(+) = dihydroxyacetone phosphate + NADPH + H(+). Its pathway is membrane lipid metabolism; glycerophospholipid metabolism. In terms of biological role, catalyzes the reduction of the glycolytic intermediate dihydroxyacetone phosphate (DHAP) to sn-glycerol 3-phosphate (G3P), the key precursor for phospholipid synthesis. In Pseudomonas savastanoi pv. phaseolicola (strain 1448A / Race 6) (Pseudomonas syringae pv. phaseolicola (strain 1448A / Race 6)), this protein is Glycerol-3-phosphate dehydrogenase [NAD(P)+].